The primary structure comprises 101 residues: Defensin-like protein 222 (101 aa).

Residues 1 to 21 (MRTIVLFSTLMILVLSCMSNA) form the signal peptide. 3 disulfide bridges follow: cysteine 68/cysteine 85, cysteine 71/cysteine 90, and cysteine 75/cysteine 92.

It belongs to the DEFL family.

The protein resides in the secreted. In Arabidopsis thaliana (Mouse-ear cress), this protein is Defensin-like protein 222.